A 443-amino-acid chain; its full sequence is Serine/threonine-protein kinase 40 (443 aa).

Over residues 1–11 (MKRRASERDAG) the composition is skewed to basic and acidic residues. The disordered stretch occupies residues 1 to 26 (MKRRASERDAGETSARSKALCSSISG). Over residues 14-26 (SARSKALCSSISG) the composition is skewed to polar residues. Positions 35 to 332 (FILGPRLGNS…EVLESLGAII (298 aa)) constitute a Protein kinase domain. ATP is bound by residues 41–49 (LGNSPVPSI) and K66. Catalysis depends on D197, which acts as the Proton acceptor.

It belongs to the protein kinase superfamily. CAMK Ser/Thr protein kinase family.

It localises to the nucleus. Its subcellular location is the cytoplasm. It carries out the reaction L-seryl-[protein] + ATP = O-phospho-L-seryl-[protein] + ADP + H(+). The catalysed reaction is L-threonyl-[protein] + ATP = O-phospho-L-threonyl-[protein] + ADP + H(+). May be a negative regulator of NF-kappa-B and p53-mediated gene transcription. This chain is Serine/threonine-protein kinase 40 (stk40), found in Xenopus tropicalis (Western clawed frog).